We begin with the raw amino-acid sequence, 150 residues long: SsrA-binding protein (150 aa).

It belongs to the SmpB family.

It is found in the cytoplasm. Required for rescue of stalled ribosomes mediated by trans-translation. Binds to transfer-messenger RNA (tmRNA), required for stable association of tmRNA with ribosomes. tmRNA and SmpB together mimic tRNA shape, replacing the anticodon stem-loop with SmpB. tmRNA is encoded by the ssrA gene; the 2 termini fold to resemble tRNA(Ala) and it encodes a 'tag peptide', a short internal open reading frame. During trans-translation Ala-aminoacylated tmRNA acts like a tRNA, entering the A-site of stalled ribosomes, displacing the stalled mRNA. The ribosome then switches to translate the ORF on the tmRNA; the nascent peptide is terminated with the 'tag peptide' encoded by the tmRNA and targeted for degradation. The ribosome is freed to recommence translation, which seems to be the essential function of trans-translation. In Polynucleobacter asymbioticus (strain DSM 18221 / CIP 109841 / QLW-P1DMWA-1) (Polynucleobacter necessarius subsp. asymbioticus), this protein is SsrA-binding protein.